The chain runs to 180 residues: Crossover junction endodeoxyribonuclease RuvC (180 aa).

Residues aspartate 7, glutamate 66, and aspartate 138 contribute to the active site. Mg(2+)-binding residues include aspartate 7, glutamate 66, and aspartate 138.

It belongs to the RuvC family. As to quaternary structure, homodimer which binds Holliday junction (HJ) DNA. The HJ becomes 2-fold symmetrical on binding to RuvC with unstacked arms; it has a different conformation from HJ DNA in complex with RuvA. In the full resolvosome a probable DNA-RuvA(4)-RuvB(12)-RuvC(2) complex forms which resolves the HJ. Requires Mg(2+) as cofactor.

It is found in the cytoplasm. The enzyme catalyses Endonucleolytic cleavage at a junction such as a reciprocal single-stranded crossover between two homologous DNA duplexes (Holliday junction).. In terms of biological role, the RuvA-RuvB-RuvC complex processes Holliday junction (HJ) DNA during genetic recombination and DNA repair. Endonuclease that resolves HJ intermediates. Cleaves cruciform DNA by making single-stranded nicks across the HJ at symmetrical positions within the homologous arms, yielding a 5'-phosphate and a 3'-hydroxyl group; requires a central core of homology in the junction. The consensus cleavage sequence is 5'-(A/T)TT(C/G)-3'. Cleavage occurs on the 3'-side of the TT dinucleotide at the point of strand exchange. HJ branch migration catalyzed by RuvA-RuvB allows RuvC to scan DNA until it finds its consensus sequence, where it cleaves and resolves the cruciform DNA. This chain is Crossover junction endodeoxyribonuclease RuvC, found in Burkholderia lata (strain ATCC 17760 / DSM 23089 / LMG 22485 / NCIMB 9086 / R18194 / 383).